The chain runs to 183 residues: Adenine phosphoribosyltransferase (183 aa).

This sequence belongs to the purine/pyrimidine phosphoribosyltransferase family. Homodimer.

The protein localises to the cytoplasm. It catalyses the reaction AMP + diphosphate = 5-phospho-alpha-D-ribose 1-diphosphate + adenine. It participates in purine metabolism; AMP biosynthesis via salvage pathway; AMP from adenine: step 1/1. Its function is as follows. Catalyzes a salvage reaction resulting in the formation of AMP, that is energically less costly than de novo synthesis. The sequence is that of Adenine phosphoribosyltransferase from Escherichia coli (strain K12 / MC4100 / BW2952).